A 466-amino-acid polypeptide reads, in one-letter code: RUS family member 1 (466 aa).

At alanine 2 the chain carries N-acetylalanine. The helical transmembrane segment at leucine 245 to leucine 265 threads the bilayer.

It belongs to the RUS1 family.

It is found in the membrane. This is RUS family member 1 from Mus musculus (Mouse).